The following is a 247-amino-acid chain: Probable transcriptional regulatory protein GM21_0933 (247 aa).

This sequence belongs to the TACO1 family.

The protein localises to the cytoplasm. The sequence is that of Probable transcriptional regulatory protein GM21_0933 from Geobacter sp. (strain M21).